The chain runs to 53 residues: Collagen alpha-1(I) chain (53 aa).

The disordered stretch occupies residues 1 to 53 (SYGYBZKSAGVSVPGPMGPSGPRGLPGPPGAPGPZGFZGPPGZPGZPGSSGPM). Lys7 is subject to Allysine. Ser8 is modified (phosphoserine). Residues 10 to 23 (GVSVPGPMGPSGPR) show a composition bias toward low complexity. 4-hydroxyproline is present on residues Pro26, Pro29, Pro32, Pro41, Pro44, and Pro47. Residues 34-53 (PZGFZGPPGZPGZPGSSGPM) show a composition bias toward low complexity.

The protein belongs to the fibrillar collagen family. As to quaternary structure, trimers of one alpha 2(I) and two alpha 1(I) chains. Interacts with MRC2. Interacts with TRAM2. Interacts with MFAP4 in a Ca (2+)-dependent manner. Post-translationally, contains mostly 4-hydroxyproline. Proline residues at the third position of the tripeptide repeating unit (G-X-Y) are hydroxylated in some or all of the chains. In terms of processing, contains 3-hydroxyproline at a few sites. This modification occurs on the first proline residue in the sequence motif Gly-Pro-Hyp, where Hyp is 4-hydroxyproline. Lysine residues at the third position of the tripeptide repeating unit (G-X-Y) are 5-hydroxylated in some or all of the chains. Post-translationally, O-glycosylated on hydroxylated lysine residues. The O-linked glycan consists of a Glc-Gal disaccharide. As to expression, forms the fibrils of tendon, ligaments and bones. In bones the fibrils are mineralized with calcium hydroxyapatite.

The protein localises to the secreted. Its subcellular location is the extracellular space. It localises to the extracellular matrix. Functionally, type I collagen is a member of group I collagen (fibrillar forming collagen). The polypeptide is Collagen alpha-1(I) chain (COL1A1) (Oryctolagus cuniculus (Rabbit)).